Consider the following 701-residue polypeptide: DNA ligase A (701 aa).

The disordered stretch occupies residues M1 to R23. Residues D49–D53, S99–L100, and E129 each bind NAD(+). K131 acts as the N6-AMP-lysine intermediate in catalysis. Residues R152, E192, K308, and K332 each coordinate NAD(+). 4 residues coordinate Zn(2+): C426, C429, C445, and C451. The BRCT domain maps to S615–E701.

The protein belongs to the NAD-dependent DNA ligase family. LigA subfamily. It depends on Mg(2+) as a cofactor. Mn(2+) is required as a cofactor.

The catalysed reaction is NAD(+) + (deoxyribonucleotide)n-3'-hydroxyl + 5'-phospho-(deoxyribonucleotide)m = (deoxyribonucleotide)n+m + AMP + beta-nicotinamide D-nucleotide.. Its function is as follows. DNA ligase that catalyzes the formation of phosphodiester linkages between 5'-phosphoryl and 3'-hydroxyl groups in double-stranded DNA using NAD as a coenzyme and as the energy source for the reaction. It is essential for DNA replication and repair of damaged DNA. Probably the only ligase required for non-homologous end joining (NHEJ) repair of 3-overhangs. This chain is DNA ligase A, found in Mycolicibacterium smegmatis (strain ATCC 700084 / mc(2)155) (Mycobacterium smegmatis).